Reading from the N-terminus, the 352-residue chain is Ion-translocating oxidoreductase complex subunit D (352 aa).

The next 5 helical transmembrane spans lie at 20-40 (IMLL…WFFG), 42-62 (GTLV…ALVL), 78-109 (ALLT…VIIA), 123-143 (PAMI…TSWL), and 148-168 (IAVN…GHIT). Thr187 bears the FMN phosphoryl threonine mark. A run of 5 helical transmembrane segments spans residues 215–235 (LAGV…VWLL), 242–262 (WHIP…GWLF), 267–287 (LAAP…FFIL), 301–321 (LIFG…GGYP), and 322–342 (DGVA…DYYT).

The protein belongs to the NqrB/RnfD family. As to quaternary structure, the complex is composed of six subunits: RsxA, RsxB, RsxC, RsxD, RsxE and RsxG. FMN is required as a cofactor.

It is found in the cell inner membrane. Part of a membrane-bound complex that couples electron transfer with translocation of ions across the membrane. Required to maintain the reduced state of SoxR. The polypeptide is Ion-translocating oxidoreductase complex subunit D (Escherichia coli (strain SMS-3-5 / SECEC)).